A 426-amino-acid chain; its full sequence is 3-phosphoshikimate 1-carboxyvinyltransferase (426 aa).

3-phosphoshikimate contacts are provided by K22, S23, and R27. K22 lines the phosphoenolpyruvate pocket. The phosphoenolpyruvate site is built by G96 and R124. 3-phosphoshikimate contacts are provided by S170, S171, Q172, S198, D314, N337, and K341. Q172 lines the phosphoenolpyruvate pocket. D314 serves as the catalytic Proton acceptor. Residues R345, R387, and K412 each contribute to the phosphoenolpyruvate site.

Belongs to the EPSP synthase family. As to quaternary structure, monomer.

Its subcellular location is the cytoplasm. The enzyme catalyses 3-phosphoshikimate + phosphoenolpyruvate = 5-O-(1-carboxyvinyl)-3-phosphoshikimate + phosphate. The protein operates within metabolic intermediate biosynthesis; chorismate biosynthesis; chorismate from D-erythrose 4-phosphate and phosphoenolpyruvate: step 6/7. Catalyzes the transfer of the enolpyruvyl moiety of phosphoenolpyruvate (PEP) to the 5-hydroxyl of shikimate-3-phosphate (S3P) to produce enolpyruvyl shikimate-3-phosphate and inorganic phosphate. This is 3-phosphoshikimate 1-carboxyvinyltransferase from Shewanella woodyi (strain ATCC 51908 / MS32).